Here is a 106-residue protein sequence, read N- to C-terminus: Iron-sulfur cluster assembly protein CyaY (106 aa).

The protein belongs to the frataxin family.

Its function is as follows. Involved in iron-sulfur (Fe-S) cluster assembly. May act as a regulator of Fe-S biogenesis. The protein is Iron-sulfur cluster assembly protein CyaY of Dickeya chrysanthemi (Pectobacterium chrysanthemi).